Reading from the N-terminus, the 431-residue chain is UDP-N-acetylmuramoylalanine--D-glutamate ligase (431 aa).

ATP is bound at residue G111–T117.

This sequence belongs to the MurCDEF family.

The protein localises to the cytoplasm. The enzyme catalyses UDP-N-acetyl-alpha-D-muramoyl-L-alanine + D-glutamate + ATP = UDP-N-acetyl-alpha-D-muramoyl-L-alanyl-D-glutamate + ADP + phosphate + H(+). Its pathway is cell wall biogenesis; peptidoglycan biosynthesis. Its function is as follows. Cell wall formation. Catalyzes the addition of glutamate to the nucleotide precursor UDP-N-acetylmuramoyl-L-alanine (UMA). This is UDP-N-acetylmuramoylalanine--D-glutamate ligase from Petrotoga mobilis (strain DSM 10674 / SJ95).